Reading from the N-terminus, the 410-residue chain is MSHDPVVPSAPATDGGATDGPRLGVVVVAAGSGTRLGAGIPKALVEVGGVTLLARSLSSVLGLAEEAHVVVVAPDTHLAETSAVVDAVAGAARGSVAVVVGGATRQGSVRAGLAALVGSVDTVLVHDAARALTPTDLFAAVARAVRAEGAGVVPGLPVTDTVKRVDPAGECLGTVDRSDLVGVQTPQGFPRAALDAAYARAAAEHTDDAALFQASGGRVRVIPGDALAFKVTTAWDLRRAEELVARDAGAGSASSRLRSGIGTDVHAVDASQPLWLAGLHWPGEAGLAGHSDGDAVSHAMCDALLSAAGLGDIGGIFGTDDPELDGAHGEVFLRRTAELVRDAGYRIVNVAVQVMAVRPKLSPRRAEAERILSAAVGAPVSLAGTTTDGLGFTGRGDGVAAVATALVERL.

A 2-C-methyl-D-erythritol 4-phosphate cytidylyltransferase region spans residues Met-1–Leu-257. The segment at Arg-258 to Leu-410 is 2-C-methyl-D-erythritol 2,4-cyclodiphosphate synthase. Residues Asp-264 and His-266 each coordinate a divalent metal cation. Residues Asp-264–His-266 and His-290–Ser-291 each bind 4-CDP-2-C-methyl-D-erythritol 2-phosphate. Position 298 (His-298) interacts with a divalent metal cation. 4-CDP-2-C-methyl-D-erythritol 2-phosphate contacts are provided by residues Asp-312 to Gly-314, Thr-385 to Asp-388, Phe-392, and Arg-395.

This sequence in the N-terminal section; belongs to the IspD/TarI cytidylyltransferase family. IspD subfamily. In the C-terminal section; belongs to the IspF family. It depends on a divalent metal cation as a cofactor.

It carries out the reaction 2-C-methyl-D-erythritol 4-phosphate + CTP + H(+) = 4-CDP-2-C-methyl-D-erythritol + diphosphate. The catalysed reaction is 4-CDP-2-C-methyl-D-erythritol 2-phosphate = 2-C-methyl-D-erythritol 2,4-cyclic diphosphate + CMP. The protein operates within isoprenoid biosynthesis; isopentenyl diphosphate biosynthesis via DXP pathway; isopentenyl diphosphate from 1-deoxy-D-xylulose 5-phosphate: step 2/6. Its pathway is isoprenoid biosynthesis; isopentenyl diphosphate biosynthesis via DXP pathway; isopentenyl diphosphate from 1-deoxy-D-xylulose 5-phosphate: step 4/6. Bifunctional enzyme that catalyzes the formation of 4-diphosphocytidyl-2-C-methyl-D-erythritol from CTP and 2-C-methyl-D-erythritol 4-phosphate (MEP) (IspD), and catalyzes the conversion of 4-diphosphocytidyl-2-C-methyl-D-erythritol 2-phosphate (CDP-ME2P) to 2-C-methyl-D-erythritol 2,4-cyclodiphosphate (ME-CPP) with a corresponding release of cytidine 5-monophosphate (CMP) (IspF). In Clavibacter michiganensis subsp. michiganensis (strain NCPPB 382), this protein is Bifunctional enzyme IspD/IspF.